A 69-amino-acid chain; its full sequence is uncharacterized protein (69 aa).

2 disordered regions span residues 1-32 (MSAP…GWGD) and 44-69 (QSDA…APSD). Composition is skewed to basic and acidic residues over residues 7–32 (NLDR…GWGD) and 46–69 (DADK…APSD).

This is an uncharacterized protein from Schizosaccharomyces pombe (strain 972 / ATCC 24843) (Fission yeast).